A 242-amino-acid chain; its full sequence is Ferritin, mitochondrial (242 aa).

The N-terminal 49 residues, 1–49 (MLPCSLFLPKHISTSLVFLRSARHGFALLPRWVPRLSSDYPPAAPIRLL), are a transit peptide targeting the mitochondrion. One can recognise a Ferritin-like diiron domain in the interval 70 to 219 (QNFHPDSEAA…DHVNNLVKMG (150 aa)). Fe cation-binding residues include glutamate 87, glutamate 122, histidine 125, glutamate 167, and glutamine 201.

This sequence belongs to the ferritin family. Homooligomer of 24 subunits. The functional molecule is roughly spherical and contains a central cavity into which the polymeric mineral iron core is deposited.

The protein resides in the mitochondrion. It carries out the reaction 4 Fe(2+) + O2 + 4 H(+) = 4 Fe(3+) + 2 H2O. Catalyzes the oxidation of ferrous iron(II) to ferric iron(III) and stores iron in a soluble, non-toxic, readily available form. Important for iron homeostasis. Iron is taken up in the ferrous form and deposited as ferric hydroxides after oxidation. This Bos taurus (Bovine) protein is Ferritin, mitochondrial.